A 406-amino-acid chain; its full sequence is Tryptophan synthase beta chain (406 aa).

N6-(pyridoxal phosphate)lysine is present on K99.

It belongs to the TrpB family. As to quaternary structure, tetramer of two alpha and two beta chains. It depends on pyridoxal 5'-phosphate as a cofactor.

It carries out the reaction (1S,2R)-1-C-(indol-3-yl)glycerol 3-phosphate + L-serine = D-glyceraldehyde 3-phosphate + L-tryptophan + H2O. Its pathway is amino-acid biosynthesis; L-tryptophan biosynthesis; L-tryptophan from chorismate: step 5/5. Functionally, the beta subunit is responsible for the synthesis of L-tryptophan from indole and L-serine. In Rhizobium leguminosarum bv. trifolii (strain WSM2304), this protein is Tryptophan synthase beta chain.